Reading from the N-terminus, the 327-residue chain is Acyl-CoA desaturase (327 aa).

Residues 1–39 (MPDREIKSPIWHPEPGTVEDVFDHTYKEKEGPKPPTVIV) lie on the Cytoplasmic side of the membrane. Residues 40-60 (WRNVILMSLLHLGALYGLFLF) traverse the membrane as a helical segment. N42 contributes to the substrate binding site. The Lumenal segment spans residues 61 to 64 (PSAR). A helical transmembrane segment spans residues 65-85 (ALTWIWFFGCLLFSALGITAG). The Cytoplasmic portion of the chain corresponds to 86–184 (AHRLWSHRSY…DKVVMFQRRF (99 aa)). Fe cation contacts are provided by H87 and H92. Positions 87 to 92 (HRLWSH) match the Histidine box-1 motif. Substrate is bound by residues N115, R122, and D123. The Fe cation site is built by H124, H127, and H128. Residues 124–128 (HRVHH) carry the Histidine box-2 motif. R155 and K156 together coordinate substrate. Residues 185–204 (YKPSVLLMCFFVPTFVPWYV) form a helical membrane-spanning segment. The Lumenal portion of the chain corresponds to 205–208 (WGES). A helical membrane pass occupies residues 209–230 (LWVAYFVPALLRYALVLNATWL). Residue W229 participates in substrate binding. The Cytoplasmic segment spans residues 231-327 (VNSAAHMWGN…RTGDGSHWSG (97 aa)). Fe cation is bound by residues H236, H265, H268, and H269. The Histidine box-3 signature appears at 265 to 269 (HNYHH).

This sequence belongs to the fatty acid desaturase type 1 family. Fe(2+) is required as a cofactor.

Its subcellular location is the endoplasmic reticulum membrane. It carries out the reaction octadecanoyl-CoA + 2 Fe(II)-[cytochrome b5] + O2 + 2 H(+) = (9Z)-octadecenoyl-CoA + 2 Fe(III)-[cytochrome b5] + 2 H2O. Stearoyl-CoA desaturase that utilizes O(2) and electrons from reduced cytochrome b5 to introduce the first double bond into saturated fatty acyl-CoA substrates. Has high specificity and catalyzes the insertion of a cis double bond at the delta-9 position into fatty acyl-CoA substrates including palmitoyl-CoA and stearoyl-CoA. Contributes to the biosynthesis of membrane phospholipids, cholesterol esters and triglycerides. This Cyprinus carpio (Common carp) protein is Acyl-CoA desaturase.